The chain runs to 352 residues: Guanidino acid hydrolase, mitochondrial (352 aa).

Residues 1–35 (MLRLLASGCARGPGPGVGARPAAGLFHPGRRQSRQ) constitute a mitochondrion transit peptide. The tract at residues 11-49 (RGPGPGVGARPAAGLFHPGRRQSRQASDAPRNQPPSPEF) is disordered. His162, Asp185, His187, and Asp189 together coordinate Mn(2+). The residue at position 193 (Lys193) is an N6-acetyllysine. At Lys217 the chain carries N6-acetyllysine; alternate. Position 217 is an N6-succinyllysine; alternate (Lys217). Positions 276 and 278 each coordinate Mn(2+).

This sequence belongs to the ureohydrolase superfamily. Arginase family. Mn(2+) serves as cofactor. As to expression, highly expressed in liver and kidney. Also found in skeletal muscle, fetal liver, brain, testis, skin and the gastrointestinal tract. Within brain, expression is higher in the cerebral cortex with lower levels in the medulla and spinal cord.

The protein localises to the mitochondrion. The catalysed reaction is 3-guanidinopropanoate + H2O = urea + beta-alanine. It carries out the reaction 4-guanidinobutanoate + H2O = urea + 4-aminobutanoate. The enzyme catalyses taurocyamine + H2O = urea + taurine. It catalyses the reaction L-arginine + H2O = urea + L-ornithine. It participates in nitrogen metabolism; urea cycle; L-ornithine and urea from L-arginine: step 1/1. Hydrolyzes linear guanidino acids to form urea and the corresponding amines. Displays specificity for substrates having a negatively charged head group and short chains including taurocyamine, guanidino propanoic and butanoic acids. May protect cells by detoxifying potentially harmful amounts of guanidino acids. Metabolizes L-arginine with low efficiency. The chain is Guanidino acid hydrolase, mitochondrial (AGMAT) from Homo sapiens (Human).